The sequence spans 1879 residues: Genome polyprotein (1879 aa).

Residues 37–98 (GPLDHDSRHG…TSTDVVRSGP (62 aa)) form a disordered region. Over residues 38–50 (PLDHDSRHGRDPV) the composition is skewed to basic and acidic residues. Over residues 79-93 (SGTNPSHLKPTSTDV) the composition is skewed to polar residues. Residues 564 to 720 (DNVISCCTRR…ENWKRENPGK (157 aa)) form the SF3 helicase domain. An ATP-binding site is contributed by 590-597 (GPPGCGKT). At Y1093 the chain carries O-(5'-phospho-RNA)-tyrosine. Residues 1188-1341 (GVTHKNAIVS…KLIVPYVKVD (154 aa)) enclose the Peptidase C24 domain. Residues H1222, E1243, and C1305 each act as for 3CLpro activity in the active site. One can recognise a RdRp catalytic domain in the interval 1591-1716 (HDRYCVDYSK…IVPPLISSVM (126 aa)).

In terms of assembly, homodimer. Interacts with NTPase, protein p30 and protease-polymerase p76. As to quaternary structure, interacts with capsid protein VP1 and protease-polymerase p76. Interacts with host IEF4e; this interaction plays a role in translation of viral proteins. Homooligomer. Interacts with Vpg, protein p32 and may interact with capsid protein VP1. In terms of processing, specific enzymatic cleavages in vivo yield mature proteins. Pro-Pol is first autocatalytically cleaved, then processes the whole polyprotein. Post-translationally, VPg is uridylylated by the polymerase and is covalently attached to the 5'-end of the polyadenylated genomic and subgenomic RNAs. This uridylylated form acts as a nucleotide-peptide primer for the polymerase.

The protein localises to the host endoplasmic reticulum membrane. It carries out the reaction a ribonucleoside 5'-triphosphate + H2O = a ribonucleoside 5'-diphosphate + phosphate + H(+). The enzyme catalyses RNA(n) + a ribonucleoside 5'-triphosphate = RNA(n+1) + diphosphate. The catalysed reaction is Endopeptidase with a preference for cleavage when the P1 position is occupied by Glu-|-Xaa and the P1' position is occupied by Gly-|-Yaa.. Functionally, together with NTPase and NS4, initiates the formation of the replication complex. Induces the proliferation of the host smooth ER membranes forming long tubular structures. These remodeled membranes probably form the viral factories that contain the replication complex. Its function is as follows. Displays NTPase activity, but no helicase activity. Induces the formation of convoluted membranes derived from the host ER. These remodeled membranes probably form the viral factories that contain the replication complex. Together with NS2 and NS4, initiates the formation of the replication complex. Probable key protein responsible for the formation of membrane alterations by the virus. Induces the formation of convoluted membranes derived from the host ER. These remodeled membranes probably form the viral factories that contain the replication complex. Together with NS2 and NTPase, initiates the formation of the replication complex. In terms of biological role, viral genome-linked protein is covalently linked to the 5'-end of the positive-strand, negative-strand genomic RNAs and subgenomic RNA. Acts as a genome-linked replication primer. May recruit ribosome to viral RNA thereby promoting viral proteins translation. Interacts with host translation initiation complex to allow the translation of viral proteins. Functionally, protease-polymerase p76 processes the polyprotein: Pro-Pol is first released by autocleavage, then all other proteins are cleaved. Cleaves host translation initiation factor eIF4G1, eIF4G2 and PABP1 thereby inducing a shutdown of host protein synthesis. This shutdown may not prevent viral mRNA from being translated since viral Vpg replaces the cap. Also functions as an RNA-directed RNA polymerase, which replicates genomic and antigenomic viral RNA by recognizing specific signals. Also transcribes a subgenomic mRNA by initiating RNA synthesis internally on antigenomic RNA. This sgRNA codes for structural proteins. Catalyzes the covalent attachment VPg with viral RNAs. This chain is Genome polyprotein, found in Otariidae (fur seals &amp; sea lions).